A 522-amino-acid polypeptide reads, in one-letter code: Anti-sigma-I factor RsgI4 (522 aa).

The Cytoplasmic segment spans residues 1 to 51 (MNLGVVIKIKRKKAIIVTETGEFKAVNARNGMFLGQKILFDQQDVIENNRN). Residues 2–49 (NLGVVIKIKRKKAIIVTETGEFKAVNARNGMFLGQKILFDQQDVIENN) form the RsgI N-terminal anti-sigma domain. A helical transmembrane segment spans residues 52 to 72 (GIGLAYSAAIAGMVAVFVFMF). Topologically, residues 73-522 (TYFGLHNFNG…SGILKWGREP (450 aa)) are extracellular. Low complexity predominate over residues 311–361 (SAKTPERATTVPVNTPVKPTDAPTKSPATATATATRAPVKATATPAKTLKP). Positions 311–371 (SAKTPERATT…SDTPVKTPDG (61 aa)) are disordered. The 152-residue stretch at 371-522 (GEQSVKVRFY…SGILKWGREP (152 aa)) folds into the CBM3 domain.

As to quaternary structure, interacts (via RsgI N-terminal anti-sigma domain) with SigI4.

Its subcellular location is the cell membrane. Functionally, anti-sigma factor for SigI4. Negatively regulates SigI4 activity through direct interaction. Binding of the polysaccharide substrate to the extracellular C-terminal sensing domain of RsgI4 may induce a conformational change in its N-terminal cytoplasmic region, leading to the release and activation of SigI4. This is Anti-sigma-I factor RsgI4 from Acetivibrio thermocellus (strain ATCC 27405 / DSM 1237 / JCM 9322 / NBRC 103400 / NCIMB 10682 / NRRL B-4536 / VPI 7372) (Clostridium thermocellum).